We begin with the raw amino-acid sequence, 747 residues long: Potassium transporter 20 (747 aa).

Topologically, residues 1–47 are cytoplasmic; sequence MSVQEDDDAAGPEVDRLRRHDSFYGDAEKVSNDKSHGTGENWARTLQ. The helical transmembrane segment at 48–68 threads the bilayer; the sequence is LAFQSIGVVYGDVGTSPLYVY. The Extracellular portion of the chain corresponds to 69 to 84; it reads SSTFPDGVKHPDDLVG. The helical transmembrane segment at 85 to 105 threads the bilayer; it reads VLSLMLYTLILIPMVKYVFIV. Over 106 to 171 the chain is Cytoplasmic; the sequence is LYANDNGDGG…QKLESSNAAK (66 aa). The helical transmembrane segment at 172 to 192 threads the bilayer; the sequence is IALFTITILGTSMVMGDGTLT. Topologically, residues 193–209 are extracellular; the sequence is PAISVLSAVSGIREKAP. Residues 210 to 230 traverse the membrane as a helical segment; it reads SLTQLQVVWISVPILIVLFSV. Residues 231-237 lie on the Cytoplasmic side of the membrane; the sequence is QRFGTDK. Residues 238–258 form a helical membrane-spanning segment; that stretch reads VGYSFAPVISVWFVLIAGIGA. Residues 259-288 lie on the Extracellular side of the membrane; sequence YNLAVHEITILRAFNPMYIIDYFRRNGKEA. The chain crosses the membrane as a helical span at residues 289-309; it reads WVSLGGAVLCITGTEAMFADL. Residues 310 to 318 lie on the Cytoplasmic side of the membrane; it reads GHFNIRAIQ. The chain crosses the membrane as a helical span at residues 319–339; sequence LSFTCVLFPSVALCYMGQAAY. Over 340 to 353 the chain is Extracellular; it reads LRKFPEDVGDTFYK. Residues 354 to 374 traverse the membrane as a helical segment; the sequence is SLPAPLFWPVFVVAIMAAIIA. Over 375-410 the chain is Cytoplasmic; sequence SQAMLSGAFAILSKALPLGCFPRVEVVHTSNKYEGQ. A helical transmembrane segment spans residues 411 to 431; sequence VYIPEVNFLIGVASVAITVAF. The Extracellular portion of the chain corresponds to 432–442; it reads QTTANIGNAYG. A helical membrane pass occupies residues 443-463; the sequence is ICVVMVFSITTHLMTVVMLLI. At 464-469 the chain is on the cytoplasmic side; that stretch reads WKVRLP. Residues 470–490 traverse the membrane as a helical segment; sequence FIAAFYVVFTFTEFLYLSSIL. Over 491–496 the chain is Extracellular; that stretch reads SKFAEG. Residues 497-517 traverse the membrane as a helical segment; it reads GYLPFCFSLVLMALMATWHYV. Over 518–747 the chain is Cytoplasmic; that stretch reads HVKRYWYELD…LLKVGITYEI (230 aa).

This sequence belongs to the HAK/KUP transporter (TC 2.A.72.3) family.

It is found in the membrane. Its function is as follows. High-affinity potassium transporter. In Oryza sativa subsp. japonica (Rice), this protein is Potassium transporter 20 (HAK20).